A 205-amino-acid polypeptide reads, in one-letter code: Large ribosomal subunit protein eL15 (205 aa).

2 disordered regions span residues 70 to 90 and 172 to 197; these read GRKR…HGVN and RGLR…KRRN.

It belongs to the eukaryotic ribosomal protein eL15 family.

In Dictyostelium discoideum (Social amoeba), this protein is Large ribosomal subunit protein eL15 (rpl15-1).